Consider the following 583-residue polypeptide: Protein FMP25, mitochondrial (583 aa).

A mitochondrion-targeting transit peptide spans 1-25; the sequence is MSFRLFTRTSQRLPRLNWVSPIRRY. Residues 83 to 105 traverse the membrane as a helical segment; sequence AVGQGILILVVVGGLGTAYLRWP. 4 RCC1 repeats span residues 332–389, 390–452, 459–510, and 512–569; these read KGQF…AIDK, TGEI…VTIR, DHHY…TETE, and ENEV…KEQR.

It localises to the mitochondrion membrane. The polypeptide is Protein FMP25, mitochondrial (FMP25) (Saccharomyces cerevisiae (strain ATCC 204508 / S288c) (Baker's yeast)).